Here is a 331-residue protein sequence, read N- to C-terminus: UDP-GalNAc:beta-1,3-N-acetylgalactosaminyltransferase 1 (331 aa).

Over 1-20 (MASALWTVLPSRMSLRSLKW) the chain is Cytoplasmic. Residues 21-43 (SLLLLSLLSFFVMWYLSLPHYNV) form a helical; Signal-anchor for type II membrane protein membrane-spanning segment. At 44–331 (IERVNWMYFY…VMLRNTTCHY (288 aa)) the chain is on the lumenal side. Asn-72, Asn-154, Asn-198, Asn-212, and Asn-326 each carry an N-linked (GlcNAc...) asparagine glycan.

Belongs to the glycosyltransferase 31 family. Mg(2+) is required as a cofactor. Higher expression in heart and brain, and to a lesser extent in lung, placenta, kidney and testis. Lower expression in liver, spleen and stomach. No expression in skeletal muscle.

It is found in the golgi apparatus membrane. The enzyme catalyses a globoside Gb3Cer (d18:1(4E)) + UDP-N-acetyl-alpha-D-galactosamine = a globoside Gb4Cer (d18:1(4E)) + UDP + H(+). It participates in protein modification; protein glycosylation. Functionally, transfers N-acetylgalactosamine onto globotriaosylceramide. Plays a critical role in preimplantation stage embryonic development. The polypeptide is UDP-GalNAc:beta-1,3-N-acetylgalactosaminyltransferase 1 (Homo sapiens (Human)).